The chain runs to 830 residues: Ent-cassa-12,15-diene synthase (830 aa).

A disordered region spans residues 1 to 50 (MMLLGSPSSGGYGGKFAGASPAGGTTTMAPSAKQPSSRAPPPGITGGRND). Over residues 23–37 (GGTTTMAPSAKQPSS) the composition is skewed to polar residues. D577, D581, N721, and E729 together coordinate Mg(2+). Residues 577–581 (DDLFD) carry the DDXXD motif motif.

The protein belongs to the terpene synthase family. The cofactor is Mg(2+). In terms of tissue distribution, expressed in roots and stems.

The catalysed reaction is ent-copalyl diphosphate = ent-cassa-12,15-diene + diphosphate. In terms of biological role, involved in phytocassane phytoalexins biosynthesis. Catalyzes the conversion of ent-copalyl diphosphate to the phytoalexin precursor ent-cassa-12,15-diene. The protein is Ent-cassa-12,15-diene synthase (KSL7) of Oryza sativa subsp. indica (Rice).